A 188-amino-acid polypeptide reads, in one-letter code: HGPRTase-like protein 1 (188 aa).

Belongs to the purine/pyrimidine phosphoribosyltransferase family. Archaeal HPRT subfamily.

Its function is as follows. May catalyze a purine salvage reaction, the substrate is unknown. The protein is HGPRTase-like protein 1 of Haloquadratum walsbyi (strain DSM 16854 / JCM 12705 / C23).